A 505-amino-acid chain; its full sequence is Glutamate--tRNA ligase (505 aa).

The 'HIGH' region motif lies at 12–22 (PSPTGALHIGG). The short motif at 260 to 264 (KLSKR) is the 'KMSKS' region element. Position 263 (lysine 263) interacts with ATP.

The protein belongs to the class-I aminoacyl-tRNA synthetase family. Glutamate--tRNA ligase type 1 subfamily. Monomer.

The protein localises to the cytoplasm. The enzyme catalyses tRNA(Glu) + L-glutamate + ATP = L-glutamyl-tRNA(Glu) + AMP + diphosphate. Functionally, catalyzes the attachment of glutamate to tRNA(Glu) in a two-step reaction: glutamate is first activated by ATP to form Glu-AMP and then transferred to the acceptor end of tRNA(Glu). The polypeptide is Glutamate--tRNA ligase (Phocaeicola vulgatus (strain ATCC 8482 / DSM 1447 / JCM 5826 / CCUG 4940 / NBRC 14291 / NCTC 11154) (Bacteroides vulgatus)).